Consider the following 155-residue polypeptide: Small ribosomal subunit protein uS7c (155 aa).

Belongs to the universal ribosomal protein uS7 family. As to quaternary structure, part of the 30S ribosomal subunit.

The protein localises to the plastid. The protein resides in the chloroplast. Its function is as follows. One of the primary rRNA binding proteins, it binds directly to 16S rRNA where it nucleates assembly of the head domain of the 30S subunit. This is Small ribosomal subunit protein uS7c (rps7) from Cornus mas (Cornelian cherry dogwood).